A 225-amino-acid polypeptide reads, in one-letter code: MLGLDACELGAQLLELLRLALCARVLLTDKEGGQLPPEEALDEAVPEYRAPGKKSLLEIQQLDPDDESLVKYKRALLGPVLPAVDPSLPNVQVTRLTLISEQAPGPIVMDLTGELAALKNQVFVLKEGVDYKVKITFKVNKEIVSGLKCLHHTYRHGLRVDKAVYMVGSYGPSAQEYEFVTPVEEAPRGALVRGAYVVTSFFTDDDRTAHLSWEWGLYVCQDWER.

The protein belongs to the Rho GDI family.

It localises to the cytoplasm. Its function is as follows. Inhibits GDP/GTP exchange reaction of RhoB. Interacts specifically with the GDP- and GTP-bound forms of post-translationally processed Rhob and Rhog proteins, both of which show a growth-regulated expression in mammalian cells. Stimulates the release of the GDP-bound but not the GTP-bound RhoB protein. Also inhibits the GDP/GTP exchange of RhoB but shows less ability to inhibit the dissociation of prebound GTP. The sequence is that of Rho GDP-dissociation inhibitor 3 (ARHGDIG) from Bos taurus (Bovine).